We begin with the raw amino-acid sequence, 876 residues long: uncharacterized protein (876 aa).

Over residues 37 to 48 the composition is skewed to basic and acidic residues; that stretch reads DEDKSNNDDRRS. Disordered stretches follow at residues 37–67, 112–155, 226–254, and 330–353; these read DEDK…KGSN, DESG…RNIK, KKKS…TKSQ, and MMMD…SRSI. 2 positions are modified to phosphoserine: Ser48 and Ser51. Residues 49–58 are compositionally biased toward low complexity; that stretch reads LASILDSSSS. Polar residues predominate over residues 115–131; that stretch reads GFTSDNNADYFSGNSYS. Phosphoserine occurs at positions 360, 510, 552, and 577. The disordered stretch occupies residues 490 to 513; that stretch reads PEVTKQKNTSGPKPGFSHSKSADA. Disordered regions lie at residues 661-728 and 750-876; these read ITGG…RSPQ and RHSL…FGRL. The span at 689–699 shows a compositional bias: basic residues; it reads SKSKSRSSSKS. The segment covering 717–726 has biased composition (low complexity); that stretch reads SSASASRSRS. Ser775 bears the Phosphoserine mark. 2 stretches are compositionally biased toward low complexity: residues 794 to 808 and 842 to 854; these read NKDS…SSSL and FSFF…SPSS.

This is an uncharacterized protein from Saccharomyces cerevisiae (strain ATCC 204508 / S288c) (Baker's yeast).